Reading from the N-terminus, the 254-residue chain is Alcohol dehydrogenase 2 (254 aa).

An NAD(+)-binding site is contributed by 10 to 33 (FVAGLGGIGFDTSREIVKSGPKNL). Ser138 provides a ligand contact to substrate. Catalysis depends on Tyr151, which acts as the Proton acceptor.

It belongs to the short-chain dehydrogenases/reductases (SDR) family. Homodimer.

The enzyme catalyses a primary alcohol + NAD(+) = an aldehyde + NADH + H(+). It carries out the reaction a secondary alcohol + NAD(+) = a ketone + NADH + H(+). This chain is Alcohol dehydrogenase 2 (Adh2), found in Drosophila buzzatii (Fruit fly).